A 208-amino-acid polypeptide reads, in one-letter code: Proteasome subunit beta 2 (208 aa).

Residues 1 to 9 constitute a propeptide, removed in mature form; by autocatalysis; that stretch reads MSGKKIVSK. The active-site Nucleophile is Thr10.

It belongs to the peptidase T1B family. The 20S proteasome core is composed of 14 alpha and 14 beta subunits that assemble into four stacked heptameric rings, resulting in a barrel-shaped structure. The two inner rings, each composed of seven catalytic beta subunits, are sandwiched by two outer rings, each composed of seven alpha subunits. The catalytic chamber with the active sites is on the inside of the barrel. Has a gated structure, the ends of the cylinder being occluded by the N-termini of the alpha-subunits. Is capped at one or both ends by the proteasome regulatory ATPase, PAN.

The protein localises to the cytoplasm. It carries out the reaction Cleavage of peptide bonds with very broad specificity.. Its activity is regulated as follows. The formation of the proteasomal ATPase PAN-20S proteasome complex, via the docking of the C-termini of PAN into the intersubunit pockets in the alpha-rings, triggers opening of the gate for substrate entry. Interconversion between the open-gate and close-gate conformations leads to a dynamic regulation of the 20S proteasome proteolysis activity. In terms of biological role, component of the proteasome core, a large protease complex with broad specificity involved in protein degradation. In Staphylothermus marinus (strain ATCC 43588 / DSM 3639 / JCM 9404 / F1), this protein is Proteasome subunit beta 2.